The sequence spans 508 residues: Probable protein kinase UbiB (508 aa).

One can recognise a Protein kinase domain in the interval 118 to 494 (DFDLKPVASA…QKRQNFLLLL (377 aa)). ATP-binding positions include 124 to 132 (VASASVAQV) and K151. D286 acts as the Proton acceptor in catalysis. The chain crosses the membrane as a helical span at residues 488 to 508 (QNFLLLLIAILLAALLAKSLL).

The protein belongs to the ABC1 family. UbiB subfamily.

It localises to the cell inner membrane. It participates in cofactor biosynthesis; ubiquinone biosynthesis [regulation]. Its function is as follows. Is probably a protein kinase regulator of UbiI activity which is involved in aerobic coenzyme Q (ubiquinone) biosynthesis. This chain is Probable protein kinase UbiB, found in Chromobacterium violaceum (strain ATCC 12472 / DSM 30191 / JCM 1249 / CCUG 213 / NBRC 12614 / NCIMB 9131 / NCTC 9757 / MK).